Reading from the N-terminus, the 71-residue chain is DNA-directed RNA polymerase subunit epsilon (71 aa).

Belongs to the RNA polymerase subunit epsilon family. Monomer. RNAP is composed of a core of 2 alpha, a beta and a beta' subunit. The core is associated with a delta subunit, and at least one of epsilon or omega. When a sigma factor is associated with the core the holoenzyme is formed, which can initiate transcription.

It catalyses the reaction RNA(n) + a ribonucleoside 5'-triphosphate = RNA(n+1) + diphosphate. Its function is as follows. A non-essential component of RNA polymerase (RNAP). Has a similar structure to bacteriophage T7 protein Gp2 (AC P03704), which is known to bind to RNAP in the DNA binding-cleft. Unlike Gp2 however, this protein does not inhibit transcription initiation. This is DNA-directed RNA polymerase subunit epsilon from Geobacillus stearothermophilus (strain DSM 13240 / CIP 106956 / 10).